We begin with the raw amino-acid sequence, 554 residues long: Potassium/proton antiporter CemA (554 aa).

The helical transmembrane segment at 50-70 threads the bilayer; the sequence is SLFVVLFIPFFINIFTKIYVF. An insert region spans residues 113–410; the sequence is KTENFFPEKP…VPYNFNKNTE (298 aa). The next 3 membrane-spanning stretches (helical) occupy residues 429-449, 479-499, and 514-534; these read ISAI…LFLL, MLLF…EVIF, and IIFL…KYWI.

It belongs to the CemA family.

It localises to the plastid. The protein resides in the chloroplast inner membrane. The enzyme catalyses K(+)(in) + H(+)(out) = K(+)(out) + H(+)(in). In terms of biological role, contributes to K(+)/H(+) antiport activity by supporting proton efflux to control proton extrusion and homeostasis in chloroplasts in a light-dependent manner to modulate photosynthesis. Prevents excessive induction of non-photochemical quenching (NPQ) under continuous-light conditions. Indirectly promotes efficient inorganic carbon uptake into chloroplasts. This is Potassium/proton antiporter CemA from Stigeoclonium helveticum (Green alga).